Here is a 1651-residue protein sequence, read N- to C-terminus: Protein Wiz (1651 aa).

Positions 1–79 (MEGSLAGSLA…TPDGRGPWEH (79 aa)) are disordered. Glycyl lysine isopeptide (Lys-Gly) (interchain with G-Cter in SUMO2) cross-links involve residues Ala-11, Arg-14, Asn-29, Gly-32, Gly-39, Gly-42, and Glu-258. C2H2-type zinc fingers lie at residues 267 to 289 (FPCI…MSQH), 304 to 326 (LACG…RQLH), and 353 to 375 (LQCP…AKLH). Phe-313 participates in a covalent cross-link: Glycyl lysine isopeptide (Lys-Gly) (interchain with G-Cter in SUMO2). The tract at residues 376–399 (MREPPGQTTKEPFGGSSGAGSPSP) is disordered. The span at 386 to 399 (EPFGGSSGAGSPSP) shows a compositional bias: low complexity. The C2H2-type 4 zinc finger occupies 416-439 (SACVFCGFPAPSESLLREHVRLVH). Residues 546–578 (LGRNKSTVHPQGLGERRRPWSEEEEEEEEEEDV) form a disordered region. The span at 567-578 (EEEEEEEEEEDV) shows a compositional bias: acidic residues. C2H2-type zinc fingers lie at residues 701–723 (RKCP…VRGH) and 769–791 (MRCD…ARAH). Residues 819–843 (AEQPPSPLGREPGGPPGSFLTSRRP) form a disordered region. Residues 870 to 892 (TTCEVCGACFETRKGLSSHARSH) form a C2H2-type 7 zinc finger. Glycyl lysine isopeptide (Lys-Gly) (interchain with G-Cter in SUMO2) cross-links involve residues Lys-883, Lys-939, Lys-955, Lys-967, and Lys-988. The disordered stretch occupies residues 972-1038 (FSAKGLGHPP…GPLNLTSGPE (67 aa)). A compositionally biased stretch (low complexity) spans 984 to 994 (PLLKKTPLALA). Ser-996 is subject to Phosphoserine. A Phosphothreonine modification is found at Thr-998. Residues Lys-1000 and Lys-1005 each participate in a glycyl lysine isopeptide (Lys-Gly) (interchain with G-Cter in SUMO2) cross-link. A phosphoserine mark is found at Ser-1006, Ser-1012, Ser-1017, and Ser-1025. The segment at 1030 to 1034 (PLNLT) is interaction with CTBP1 and CTBP2 1. The segment at 1043-1065 (IRCEFCGEFFENRKGLSSHARSH) adopts a C2H2-type 8 zinc-finger fold. A Glycyl lysine isopeptide (Lys-Gly) (interchain with G-Cter in SUMO2) cross-link involves residue Lys-1056. Ser-1079 and Ser-1106 each carry phosphoserine. Residues 1091-1174 (RTQSRPGGPP…PGLAAPSLPK (84 aa)) form a disordered region. The span at 1097–1106 (GGPPNPPGPS) shows a compositional bias: pro residues. Glycyl lysine isopeptide (Lys-Gly) (interchain with G-Cter in SUMO2) cross-links involve residues Lys-1108 and Lys-1112. Residues Ser-1122, Ser-1127, and Ser-1134 each carry the phosphoserine modification. Glycyl lysine isopeptide (Lys-Gly) (interchain with G-Cter in SUMO2) cross-links involve residues Lys-1138 and Lys-1139. Residues Ser-1146 and Ser-1151 each carry the phosphoserine modification. Residue Lys-1162 is modified to N6,N6,N6-trimethyllysine; by EHMT2; alternate. Lys-1162 carries the N6,N6-dimethyllysine; by EHMT2; alternate modification. Residue Lys-1177 forms a Glycyl lysine isopeptide (Lys-Gly) (interchain with G-Cter in SUMO2) linkage. The interval 1214 to 1218 (PLNLS) is interaction with CTBP1 and CTBP2 2. The C2H2-type 9 zinc finger occupies 1227 to 1249 (IRCEFCGEFFENRKGLSSHARSH). Lys-1240 is covalently cross-linked (Glycyl lysine isopeptide (Lys-Gly) (interchain with G-Cter in SUMO2)). Ser-1263 carries the post-translational modification Phosphoserine. Residue Lys-1282 forms a Glycyl lysine isopeptide (Lys-Gly) (interchain with G-Cter in SUMO2) linkage. The disordered stretch occupies residues 1283–1331 (KEPPAGDLAPALAEDGPPTVAPGPVQSPLPLSPLAGRPGKPGAGPAQVP). A compositionally biased stretch (pro residues) spans 1301-1313 (TVAPGPVQSPLPL). 2 positions are modified to phosphoserine: Ser-1309 and Ser-1314. Positions 1315 to 1328 (PLAGRPGKPGAGPA) are enriched in low complexity. Glycyl lysine isopeptide (Lys-Gly) (interchain with G-Cter in SUMO2) cross-links involve residues Lys-1343, Lys-1356, Lys-1370, Lys-1372, and Lys-1382. A C2H2-type 10 zinc finger spans residues 1397-1419 (ACCELCGLYFENRKALASHARAH). Residues Lys-1448, Lys-1464, and Lys-1477 each participate in a glycyl lysine isopeptide (Lys-Gly) (interchain with G-Cter in SUMO2) cross-link. The segment at 1463-1554 (TKKFRSAGHG…ASAARGGEDT (92 aa)) is disordered. Phosphoserine is present on Ser-1480. Residues 1481-1493 (LGLAPGGLAVVGR) are compositionally biased toward low complexity. Phosphoserine is present on Ser-1517. Lys-1523 participates in a covalent cross-link: Glycyl lysine isopeptide (Lys-Gly) (interchain with G-Cter in SUMO1); alternate. A Glycyl lysine isopeptide (Lys-Gly) (interchain with G-Cter in SUMO2); alternate cross-link involves residue Lys-1523. Over residues 1523-1541 (KAEEHQRQNINKFERRQAR) the composition is skewed to basic and acidic residues. Glycyl lysine isopeptide (Lys-Gly) (interchain with G-Cter in SUMO2) cross-links involve residues Lys-1534 and Lys-1560. A C2H2-type 11 zinc finger spans residues 1596-1622 (LKCRFCEVEFQGPLSIQEEWVRHLQRH). Residues 1629–1651 (SKADPPPEESQAPQAQTAAAEAP) form a disordered region. A Glycyl lysine isopeptide (Lys-Gly) (interchain with G-Cter in SUMO2) cross-link involves residue Lys-1630. A compositionally biased stretch (low complexity) spans 1637–1651 (ESQAPQAQTAAAEAP).

It belongs to the krueppel C2H2-type zinc-finger protein family. In terms of assembly, interacts with EHMT1, EHMT2, CTBP1 and CTBP2. Part of a complex containing at least CDYL, REST, WIZ, SETB1, EHMT1 and EHMT2.

It localises to the nucleus. In terms of biological role, may link EHMT1 and EHMT2 histone methyltransferases to the CTBP corepressor machinery. May be involved in EHMT1-EHMT2 heterodimer formation and stabilization. The sequence is that of Protein Wiz (WIZ) from Homo sapiens (Human).